We begin with the raw amino-acid sequence, 296 residues long: GTP cyclohydrolase FolE2 (296 aa).

It belongs to the GTP cyclohydrolase IV family.

The enzyme catalyses GTP + H2O = 7,8-dihydroneopterin 3'-triphosphate + formate + H(+). It participates in cofactor biosynthesis; 7,8-dihydroneopterin triphosphate biosynthesis; 7,8-dihydroneopterin triphosphate from GTP: step 1/1. Its function is as follows. Converts GTP to 7,8-dihydroneopterin triphosphate. The protein is GTP cyclohydrolase FolE2 of Delftia acidovorans (strain DSM 14801 / SPH-1).